We begin with the raw amino-acid sequence, 72 residues long: Small ribosomal subunit protein bS20 (72 aa).

It belongs to the bacterial ribosomal protein bS20 family.

Its function is as follows. Binds directly to 16S ribosomal RNA. This is Small ribosomal subunit protein bS20 (rpsT) from Proteus mirabilis.